The sequence spans 432 residues: Adenylosuccinate synthetase (432 aa).

GTP is bound by residues 13 to 19 (GDEGKGK) and 41 to 43 (GHT). Asp-14 acts as the Proton acceptor in catalysis. 2 residues coordinate Mg(2+): Asp-14 and Gly-41. Residues 14–17 (DEGK), 39–42 (NAGH), Thr-130, Arg-144, Gln-225, Thr-240, and Arg-304 each bind IMP. His-42 functions as the Proton donor in the catalytic mechanism. A substrate-binding site is contributed by 300–306 (ATTGRPR). GTP contacts are provided by residues Arg-306, 332-334 (KLD), and 415-417 (STG).

This sequence belongs to the adenylosuccinate synthetase family. As to quaternary structure, homodimer. Mg(2+) is required as a cofactor.

The protein localises to the cytoplasm. It carries out the reaction IMP + L-aspartate + GTP = N(6)-(1,2-dicarboxyethyl)-AMP + GDP + phosphate + 2 H(+). Its pathway is purine metabolism; AMP biosynthesis via de novo pathway; AMP from IMP: step 1/2. Functionally, plays an important role in the de novo pathway of purine nucleotide biosynthesis. Catalyzes the first committed step in the biosynthesis of AMP from IMP. The protein is Adenylosuccinate synthetase of Hahella chejuensis (strain KCTC 2396).